The sequence spans 46 residues: Large ribosomal subunit protein bL36A (46 aa).

It belongs to the bacterial ribosomal protein bL36 family.

In Sodalis glossinidius (strain morsitans), this protein is Large ribosomal subunit protein bL36A.